An 85-amino-acid chain; its full sequence is Conotoxin MaIr94 (85 aa).

An N-terminal signal peptide occupies residues 1–22; sequence MKLTCVLIITVLFLTACQLTAA. A propeptide spanning residues 23–49 is cleaved from the precursor; the sequence is GNSRDKQEDPVVRSSGEVQRSEDIKLA. Intrachain disulfides connect C52/C69, C59/C73, and C68/C84.

It belongs to the conotoxin O1 superfamily. As to expression, expressed by the venom duct.

The protein localises to the secreted. Its function is as follows. Produces no obvious effect on ionic currents when tested on the mouse dorsal rooted ganglia (DRG). This chain is Conotoxin MaIr94, found in Conus marmoreus (Marble cone).